Reading from the N-terminus, the 400-residue chain is Acetylornithine aminotransferase (400 aa).

Residues 113 to 114 and phenylalanine 139 contribute to the pyridoxal 5'-phosphate site; that span reads GA. Arginine 142 is a N(2)-acetyl-L-ornithine binding site. Position 224-227 (224-227) interacts with pyridoxal 5'-phosphate; that stretch reads DEVQ. Residue lysine 253 is modified to N6-(pyridoxal phosphate)lysine. Serine 281 contributes to the N(2)-acetyl-L-ornithine binding site. Pyridoxal 5'-phosphate is bound at residue threonine 282.

Belongs to the class-III pyridoxal-phosphate-dependent aminotransferase family. ArgD subfamily. Homodimer. Requires pyridoxal 5'-phosphate as cofactor.

The protein localises to the cytoplasm. It catalyses the reaction N(2)-acetyl-L-ornithine + 2-oxoglutarate = N-acetyl-L-glutamate 5-semialdehyde + L-glutamate. Its pathway is amino-acid biosynthesis; L-arginine biosynthesis; N(2)-acetyl-L-ornithine from L-glutamate: step 4/4. The polypeptide is Acetylornithine aminotransferase (Mycobacterium bovis (strain ATCC BAA-935 / AF2122/97)).